The sequence spans 802 residues: Leucine--tRNA ligase (802 aa).

Positions 40-51 (PYPSGAGLHVGH) match the 'HIGH' region motif. A 'KMSKS' region motif is present at residues 576-580 (KMSKS). Lys579 is an ATP binding site.

The protein belongs to the class-I aminoacyl-tRNA synthetase family.

It is found in the cytoplasm. It carries out the reaction tRNA(Leu) + L-leucine + ATP = L-leucyl-tRNA(Leu) + AMP + diphosphate. The polypeptide is Leucine--tRNA ligase (Bacillus cereus (strain B4264)).